A 374-amino-acid chain; its full sequence is MSKFKSLLLLFGTLILLSGCSNIEVFNAKGPVASSQKFLIIYSIIFMLVIVAVVLSMFAIFIFKYSYKKNSESGKMHHNSLIETIWFVVPILIVIALAIPTVKTLYDYEKPPEKDKDPLVVYAVSAGYKWFFAYPDQHIETVNTLTIPKDRPVVFKLQSMDTMTSFWIPQLGGQKYAMTGMTMNWTLTADQLGTFRGRNSNFNGEGFSRQTFKVHSVSQNDFDKWVKEAKGKKTLSQDTFDKQLLPSTSNKELTFSGTHMAFVDPAADPEYIFYAYKRYNFEQKDPNFTAEEDLYKDVKDKPIKPARKVHITNPNYERHGMKPMILGNNEKYDNEFKKEEDHNSKEMEKISKGAKDENASKLHKKEHDDHGGGH.

The signal sequence occupies residues 1 to 19; it reads MSKFKSLLLLFGTLILLSG. Residue cysteine 20 is the site of N-palmitoyl cysteine attachment. A lipid anchor (S-diacylglycerol cysteine) is attached at cysteine 20. 2 consecutive transmembrane segments (helical) span residues 43-63 and 82-102; these read SIIF…IFIF and IETI…IPTV. Residues 317-374 form a disordered region; that stretch reads ERHGMKPMILGNNEKYDNEFKKEEDHNSKEMEKISKGAKDENASKLHKKEHDDHGGGH. Residues 330-374 are compositionally biased toward basic and acidic residues; that stretch reads EKYDNEFKKEEDHNSKEMEKISKGAKDENASKLHKKEHDDHGGGH.

This sequence belongs to the cytochrome c oxidase subunit 2 family.

The protein resides in the cell membrane. It carries out the reaction 2 a quinol + O2 = 2 a quinone + 2 H2O. Catalyzes quinol oxidation with the concomitant reduction of oxygen to water. Subunit II transfers the electrons from a quinol to the binuclear center of the catalytic subunit I. The polypeptide is Probable quinol oxidase subunit 2 (qoxA) (Staphylococcus epidermidis (strain ATCC 12228 / FDA PCI 1200)).